Reading from the N-terminus, the 513-residue chain is Light-independent protochlorophyllide reductase subunit B (513 aa).

Residue D36 participates in [4Fe-4S] cluster binding. D299 (proton donor) is an active-site residue. 434-435 (GM) is a binding site for substrate.

This sequence belongs to the ChlB/BchB/BchZ family. In terms of assembly, protochlorophyllide reductase is composed of three subunits; ChlL, ChlN and ChlB. Forms a heterotetramer of two ChlB and two ChlN subunits. It depends on [4Fe-4S] cluster as a cofactor.

It is found in the plastid. The protein resides in the chloroplast. It catalyses the reaction chlorophyllide a + oxidized 2[4Fe-4S]-[ferredoxin] + 2 ADP + 2 phosphate = protochlorophyllide a + reduced 2[4Fe-4S]-[ferredoxin] + 2 ATP + 2 H2O. It participates in porphyrin-containing compound metabolism; chlorophyll biosynthesis (light-independent). Functionally, component of the dark-operative protochlorophyllide reductase (DPOR) that uses Mg-ATP and reduced ferredoxin to reduce ring D of protochlorophyllide (Pchlide) to form chlorophyllide a (Chlide). This reaction is light-independent. The NB-protein (ChlN-ChlB) is the catalytic component of the complex. This chain is Light-independent protochlorophyllide reductase subunit B, found in Anthoceros angustus (Hornwort).